Consider the following 314-residue polypeptide: NADH-ubiquinone oxidoreductase chain 1 (314 aa).

The next 8 membrane-spanning stretches (helical) occupy residues 5–25 (IMPL…VAFL), 78–98 (FSPV…PYLI), 105–125 (LGVL…MIAG), 152–172 (ALIL…SFYF), 176–196 (YVWF…SCLA), 227–247 (LIFL…VVIF), 251–271 (DIYS…FIWV), and 294–314 (LSLN…SLLF).

This sequence belongs to the complex I subunit 1 family.

It is found in the mitochondrion inner membrane. The catalysed reaction is a ubiquinone + NADH + 5 H(+)(in) = a ubiquinol + NAD(+) + 4 H(+)(out). In terms of biological role, core subunit of the mitochondrial membrane respiratory chain NADH dehydrogenase (Complex I) that is believed to belong to the minimal assembly required for catalysis. Complex I functions in the transfer of electrons from NADH to the respiratory chain. The immediate electron acceptor for the enzyme is believed to be ubiquinone. The polypeptide is NADH-ubiquinone oxidoreductase chain 1 (mt:ND1) (Anopheles gambiae (African malaria mosquito)).